An 88-amino-acid chain; its full sequence is MLGAECPKPCKGKWPTPPFDPRFPNQNQTRNCYQNFLDYHRCIKTMNRRGKSTQPCEYYFRVYHSLCPISWVQRWKEQIKDGTFAGKI.

The region spanning 29–75 (TRNCYQNFLDYHRCIKTMNRRGKSTQPCEYYFRVYHSLCPISWVQRW) is the CHCH domain. The Cx9C motif motif lies at 32–42 (CYQNFLDYHRC). Intrachain disulfides connect Cys32-Cys67 and Cys42-Cys56. The Cx10C motif signature appears at 56 to 67 (CEYYFRVYHSLC).

It belongs to the cytochrome c oxidase subunit 6B family. As to quaternary structure, component of the cytochrome c oxidase (complex IV, CIV), a multisubunit enzyme composed of 14 subunits. The complex is composed of a catalytic core of 3 subunits MT-CO1, MT-CO2 and MT-CO3, encoded in the mitochondrial DNA, and 11 supernumerary subunits COX4I1 (or COX4I2), COX5A, COX5B, COX6A2 (or COX6A1), COX6B1 (or COX6B2), COX6C, COX7A1 (or COX7A2), COX7B, COX7C, COX8B and NDUFA4, which are encoded in the nuclear genome. The complex exists as a monomer or a dimer and forms supercomplexes (SCs) in the inner mitochondrial membrane with NADH-ubiquinone oxidoreductase (complex I, CI) and ubiquinol-cytochrome c oxidoreductase (cytochrome b-c1 complex, complex III, CIII), resulting in different assemblies (supercomplex SCI(1)III(2)IV(1) and megacomplex MCI(2)III(2)IV(2)). In terms of tissue distribution, testis specific.

It is found in the mitochondrion inner membrane. It functions in the pathway energy metabolism; oxidative phosphorylation. Its function is as follows. Component of the cytochrome c oxidase, the last enzyme in the mitochondrial electron transport chain which drives oxidative phosphorylation. The respiratory chain contains 3 multisubunit complexes succinate dehydrogenase (complex II, CII), ubiquinol-cytochrome c oxidoreductase (cytochrome b-c1 complex, complex III, CIII) and cytochrome c oxidase (complex IV, CIV), that cooperate to transfer electrons derived from NADH and succinate to molecular oxygen, creating an electrochemical gradient over the inner membrane that drives transmembrane transport and the ATP synthase. Cytochrome c oxidase is the component of the respiratory chain that catalyzes the reduction of oxygen to water. Electrons originating from reduced cytochrome c in the intermembrane space (IMS) are transferred via the dinuclear copper A center (CU(A)) of subunit 2 and heme A of subunit 1 to the active site in subunit 1, a binuclear center (BNC) formed by heme A3 and copper B (CU(B)). The BNC reduces molecular oxygen to 2 water molecules using 4 electrons from cytochrome c in the IMS and 4 protons from the mitochondrial matrix. The sequence is that of Cytochrome c oxidase subunit 6B2 (COX6B2) from Bos taurus (Bovine).